The primary structure comprises 316 residues: Phosphoglycerate mutase-like protein AT74 (316 aa).

H17 serves as the catalytic Tele-phosphohistidine intermediate. The Proton donor/acceptor role is filled by E106. The segment at K275–C316 is disordered. The segment covering T279–E291 has biased composition (acidic residues).

Belongs to the phosphoglycerate mutase family. As to expression, expressed in roots, leaves, stems, flowers and siliques.

In terms of biological role, phosphoglycerate mutase-like protein lacking PGM activity. May play a role in carbohydrates metabolism. This chain is Phosphoglycerate mutase-like protein AT74, found in Arabidopsis thaliana (Mouse-ear cress).